A 311-amino-acid chain; its full sequence is Class E basic helix-loop-helix protein 22 (311 aa).

Residues 22-170 form a disordered region; that stretch reads AKRMESAFRS…GGSKKSKEQK (149 aa). Residues 81–96 show a composition bias toward low complexity; sequence GESASRSSVAESSGGE. Residues 125–147 are compositionally biased toward gly residues; it reads AGGGGGGGGGGGGGPGGGGGGGL. The bHLH domain maps to 171-225; it reads ALRLNINARERRRMHDLNDALDELRAVIPYAHSPSVRKLSKIATLLLAKNYILMQ.

The protein resides in the nucleus. In terms of biological role, may act as a transcriptional repressor. In Gallus gallus (Chicken), this protein is Class E basic helix-loop-helix protein 22 (BHLHE22).